A 231-amino-acid polypeptide reads, in one-letter code: Lipoprotein-releasing system ATP-binding protein LolD (231 aa).

The 226-residue stretch at 6–231 (LKCQSVHKVY…VLAKVAPNSL (226 aa)) folds into the ABC transporter domain. 42–49 (GASGSGKS) contacts ATP.

It belongs to the ABC transporter superfamily. Lipoprotein translocase (TC 3.A.1.125) family. In terms of assembly, the complex is composed of two ATP-binding proteins (LolD) and two transmembrane proteins (LolC and LolE).

It is found in the cell inner membrane. Its function is as follows. Part of the ABC transporter complex LolCDE involved in the translocation of mature outer membrane-directed lipoproteins, from the inner membrane to the periplasmic chaperone, LolA. Responsible for the formation of the LolA-lipoprotein complex in an ATP-dependent manner. The sequence is that of Lipoprotein-releasing system ATP-binding protein LolD from Hahella chejuensis (strain KCTC 2396).